The chain runs to 162 residues: Beta-lactoglobulin-1 (162 aa).

Intrachain disulfides connect Cys66–Cys160 and Cys106–Cys119.

The protein belongs to the calycin superfamily. Lipocalin family. As to quaternary structure, monomer.

The protein localises to the secreted. Functionally, lactoglobulin is the primary component of whey, it binds retinol and is probably involved in the transport of that molecule. The polypeptide is Beta-lactoglobulin-1 (LGB1) (Felis catus (Cat)).